Reading from the N-terminus, the 218-residue chain is Elongation factor Ts (218 aa).

An involved in Mg(2+) ion dislocation from EF-Tu region spans residues Thr-82–Val-85.

It belongs to the EF-Ts family.

Its subcellular location is the cytoplasm. Associates with the EF-Tu.GDP complex and induces the exchange of GDP to GTP. It remains bound to the aminoacyl-tRNA.EF-Tu.GTP complex up to the GTP hydrolysis stage on the ribosome. This is Elongation factor Ts from Prochlorococcus marinus (strain MIT 9301).